A 122-amino-acid chain; its full sequence is UPF0102 protein TTE1452 (122 aa).

This sequence belongs to the UPF0102 family.

This is UPF0102 protein TTE1452 from Caldanaerobacter subterraneus subsp. tengcongensis (strain DSM 15242 / JCM 11007 / NBRC 100824 / MB4) (Thermoanaerobacter tengcongensis).